The sequence spans 109 residues: MFKNIIIVVAVTLCALFTNEHVVYSANLEHGEQIFSANCAACHAGGNNVIMPEKTLKAEALEANNIKNISAIANQVKNGKNAMPSFSRLSDSDIEDVANYVLSKADKGW.

Residues 1 to 25 (MFKNIIIVVAVTLCALFTNEHVVYS) form the signal peptide. Heme c is bound by residues Cys39, Cys42, His43, and Met83.

This sequence belongs to the cytochrome c family. PetJ subfamily. As to quaternary structure, monomer. Post-translationally, binds 1 heme c group covalently per subunit.

It localises to the plastid. Its subcellular location is the chloroplast thylakoid lumen. Functionally, functions as an electron carrier between membrane-bound cytochrome b6-f and photosystem I in oxygenic photosynthesis. This chain is Cytochrome c6 (petJ), found in Cyanidium caldarium (Red alga).